Here is a 136-residue protein sequence, read N- to C-terminus: uncharacterized protein (136 aa).

This is an uncharacterized protein from Bacillus anthracis.